Consider the following 154-residue polypeptide: 6,7-dimethyl-8-ribityllumazine synthase (154 aa).

Residues tryptophan 22, 56 to 58 (AWE), and 80 to 82 (CVV) contribute to the 5-amino-6-(D-ribitylamino)uracil site. 85 to 86 (DT) provides a ligand contact to (2S)-2-hydroxy-3-oxobutyl phosphate. Histidine 88 serves as the catalytic Proton donor. Asparagine 113 contacts 5-amino-6-(D-ribitylamino)uracil. Position 127 (arginine 127) interacts with (2S)-2-hydroxy-3-oxobutyl phosphate.

This sequence belongs to the DMRL synthase family. Forms an icosahedral capsid composed of 60 subunits, arranged as a dodecamer of pentamers.

It catalyses the reaction (2S)-2-hydroxy-3-oxobutyl phosphate + 5-amino-6-(D-ribitylamino)uracil = 6,7-dimethyl-8-(1-D-ribityl)lumazine + phosphate + 2 H2O + H(+). It functions in the pathway cofactor biosynthesis; riboflavin biosynthesis; riboflavin from 2-hydroxy-3-oxobutyl phosphate and 5-amino-6-(D-ribitylamino)uracil: step 1/2. In terms of biological role, catalyzes the formation of 6,7-dimethyl-8-ribityllumazine by condensation of 5-amino-6-(D-ribitylamino)uracil with 3,4-dihydroxy-2-butanone 4-phosphate. This is the penultimate step in the biosynthesis of riboflavin. In Xylella fastidiosa (strain M23), this protein is 6,7-dimethyl-8-ribityllumazine synthase.